Consider the following 497-residue polypeptide: uncharacterized protein (497 aa).

Transmembrane regions (helical) follow at residues 91 to 111, 119 to 139, 149 to 169, 179 to 199, 215 to 235, 283 to 303, 319 to 339, 347 to 367, 374 to 394, 406 to 426, and 439 to 459; these read WVGT…STLL, VTSA…LVHS, LLGI…AQWY, AFLV…SYGL, ILFI…FIHI, MYLY…LSNF, LLMN…FGLI, MDIA…IAFA, LAGY…LSCI, FMSA…PQTF, and VSFV…YAVN.

The protein belongs to the major facilitator superfamily. Allantoate permease family.

Its subcellular location is the golgi apparatus. It localises to the membrane. This is an uncharacterized protein from Schizosaccharomyces pombe (strain 972 / ATCC 24843) (Fission yeast).